The sequence spans 71 residues: Exodeoxyribonuclease 7 small subunit (71 aa).

It belongs to the XseB family. In terms of assembly, heterooligomer composed of large and small subunits.

The protein resides in the cytoplasm. The catalysed reaction is Exonucleolytic cleavage in either 5'- to 3'- or 3'- to 5'-direction to yield nucleoside 5'-phosphates.. Its function is as follows. Bidirectionally degrades single-stranded DNA into large acid-insoluble oligonucleotides, which are then degraded further into small acid-soluble oligonucleotides. The protein is Exodeoxyribonuclease 7 small subunit of Clostridium botulinum (strain Loch Maree / Type A3).